The chain runs to 280 residues: Extracellular metalloprotease GLRG_06286 (280 aa).

The first 17 residues, 1–17, serve as a signal peptide directing secretion; it reads MQVTFTLVAALAGMASA. N-linked (GlcNAc...) asparagine glycosylation is present at Asn-51. Residue His-196 participates in Zn(2+) binding. Glu-197 is an active-site residue. Zn(2+) is bound at residue His-200. A disordered region spans residues 217–236; it reads DSIADTPAQSSPSSGCPVGR. A disulfide bond links Cys-232 and Cys-259.

Belongs to the peptidase M43B family.

The protein resides in the secreted. Functionally, secreted metalloproteinase that allows assimilation of proteinaceous substrates. The polypeptide is Extracellular metalloprotease GLRG_06286 (Colletotrichum graminicola (strain M1.001 / M2 / FGSC 10212) (Maize anthracnose fungus)).